Consider the following 490-residue polypeptide: Ribulose bisphosphate carboxylase large chain (490 aa).

Substrate is bound by residues asparagine 127 and threonine 177. Residue lysine 179 is the Proton acceptor of the active site. Residue lysine 181 participates in substrate binding. Positions 205, 207, and 208 each coordinate Mg(2+). At lysine 205 the chain carries N6-carboxylysine. The Proton acceptor role is filled by histidine 297. Positions 298, 330, and 382 each coordinate substrate.

It belongs to the RuBisCO large chain family. Type I subfamily. As to quaternary structure, heterohexadecamer of 8 large chains and 8 small chains. Mg(2+) serves as cofactor.

It localises to the plastid. The protein localises to the chloroplast. It catalyses the reaction 2 (2R)-3-phosphoglycerate + 2 H(+) = D-ribulose 1,5-bisphosphate + CO2 + H2O. The enzyme catalyses D-ribulose 1,5-bisphosphate + O2 = 2-phosphoglycolate + (2R)-3-phosphoglycerate + 2 H(+). RuBisCO catalyzes two reactions: the carboxylation of D-ribulose 1,5-bisphosphate, the primary event in carbon dioxide fixation, as well as the oxidative fragmentation of the pentose substrate in the photorespiration process. Both reactions occur simultaneously and in competition at the same active site. The polypeptide is Ribulose bisphosphate carboxylase large chain (Thalassiosira pseudonana (Marine diatom)).